We begin with the raw amino-acid sequence, 465 residues long: Endo-1,3-1,4-beta-glycanase EglC (465 aa).

3 Hemolysin-type calcium-binding repeats span residues 33 to 50 (YGTA…VDVT), 105 to 122 (FGNS…SQTI), and 123 to 140 (NGGA…ADTF). Residues 213–462 (LDRSVLTQTF…YVKAYSLDAD (250 aa)) form the GH16 domain. The Nucleophile role is filled by Glu349. Glu354 serves as the catalytic Proton donor.

Belongs to the glycosyl hydrolase 16 family.

It localises to the secreted. It functions in the pathway glycan metabolism; exopolysaccharide biosynthesis. Its function is as follows. Cleaves high molecular weight succinoglycan to yield LMW succinoglycan. Dynamically regulates the molecular weight distribution of succinoglycan by cleaving nascent succinoglycan only during a limited period after its synthesis, perhaps before it undergoes a time-dependent change in its conformation or aggregation state. In Rhizobium meliloti (strain 1021) (Ensifer meliloti), this protein is Endo-1,3-1,4-beta-glycanase EglC (eglC).